The following is a 120-amino-acid chain: Large ribosomal subunit protein bL19 (120 aa).

The protein belongs to the bacterial ribosomal protein bL19 family.

This protein is located at the 30S-50S ribosomal subunit interface and may play a role in the structure and function of the aminoacyl-tRNA binding site. In Dichelobacter nodosus (strain VCS1703A), this protein is Large ribosomal subunit protein bL19.